Here is a 165-residue protein sequence, read N- to C-terminus: Transcription elongation factor A protein-like 1 (165 aa).

Positions 1 to 101 (MENTRSENEE…EQPPCGVGKH (101 aa)) are disordered. Acidic residues predominate over residues 33–60 (CSEEDQSSEDLSSEEQSSEEEFFPEELL).

The protein belongs to the TFS-II family. TFA subfamily.

It localises to the nucleus. May be involved in transcriptional regulation. Modulates various viral and cellular promoters in a promoter context-dependent manner. Does not bind DNA directly. In Mus musculus (Mouse), this protein is Transcription elongation factor A protein-like 1.